The following is a 172-amino-acid chain: General stress protein 18 (172 aa).

The PfpI endopeptidase domain maps to 3–171 (KKIAVVLTYY…FNRESLALLE (169 aa)). The active-site Nucleophile is Cys104. His105 is an active-site residue.

The protein belongs to the peptidase C56 family.

Functionally, functions in the protection against aldehyde-stress, possibly by degrading damaged proteins. The polypeptide is General stress protein 18 (yfkM) (Bacillus subtilis (strain 168)).